A 362-amino-acid polypeptide reads, in one-letter code: Aminomethyltransferase (362 aa).

It belongs to the GcvT family. The glycine cleavage system is composed of four proteins: P, T, L and H.

The catalysed reaction is N(6)-[(R)-S(8)-aminomethyldihydrolipoyl]-L-lysyl-[protein] + (6S)-5,6,7,8-tetrahydrofolate = N(6)-[(R)-dihydrolipoyl]-L-lysyl-[protein] + (6R)-5,10-methylene-5,6,7,8-tetrahydrofolate + NH4(+). Functionally, the glycine cleavage system catalyzes the degradation of glycine. The protein is Aminomethyltransferase of Listeria welshimeri serovar 6b (strain ATCC 35897 / DSM 20650 / CCUG 15529 / CIP 8149 / NCTC 11857 / SLCC 5334 / V8).